Here is a 65-residue protein sequence, read N- to C-terminus: Large ribosomal subunit protein bL35 (65 aa).

The span at Met1–Thr15 shows a compositional bias: basic residues. Disordered stretches follow at residues Met1–Gln26 and Thr38–Ala65. Residues Arg45–Asn54 are compositionally biased toward basic and acidic residues.

It belongs to the bacterial ribosomal protein bL35 family.

In Ralstonia pickettii (strain 12J), this protein is Large ribosomal subunit protein bL35.